A 367-amino-acid polypeptide reads, in one-letter code: Cytochrome-c peroxidase IdrP2 (367 aa).

The first 28 residues, 1-28 (MTTHQSIRRLSRIAALVGLAFVAGTVAA), serve as a signal peptide directing secretion. Cytochrome c domains follow at residues 47–157 (DMVE…AMWQ) and 200–345 (SQQK…EALS). The heme c site is built by Cys-69, Cys-72, His-73, Cys-215, Cys-218, and His-219.

The iodate reductase (Idr) complex is composed of a molybdopterin-dependent iodate reductase (IdrA and IdrB subunits) and two associated peroxidases (IdrP1 and IdrP2). Heme c serves as cofactor.

The protein localises to the periplasm. It catalyses the reaction 2 Fe(II)-[cytochrome c] + H2O2 + 2 H(+) = 2 Fe(III)-[cytochrome c] + 2 H2O. Its function is as follows. Involved in iodate respiration. May play a critical role in detoxification of inadvertent H(2)O(2) generated by the iodate reductase IdrA/IdrB. The sequence is that of Cytochrome-c peroxidase IdrP2 from Denitromonas iodatirespirans.